The sequence spans 294 residues: NADH-cytochrome b5 reductase 1 (294 aa).

Residues 13–33 (PHASFLGGLVVAAILGLFIFF) traverse the membrane as a helical segment. The region spanning 44 to 147 (VEWRSFKLVD…KGPKGKFVYT (104 aa)) is the FAD-binding FR-type domain. Residues 127–142 (SLLTIGQEIKVKGPKG) and 153–185 (HLVMIAGGTGITPMYQIIKSSIKTPGDKTRLSL) contribute to the FAD site.

The protein belongs to the flavoprotein pyridine nucleotide cytochrome reductase family. As to quaternary structure, monomer. Component of the 2-(3-amino-3-carboxypropyl)histidine synthase complex composed of DPH1, DPH2, DPH3 and a NADH-dependent reductase, predominantly CBR1. The cofactor is FAD.

Its subcellular location is the mitochondrion outer membrane. The enzyme catalyses 2 Fe(III)-[cytochrome b5] + NADH = 2 Fe(II)-[cytochrome b5] + NAD(+) + H(+). The catalysed reaction is 2 Fe(3+)-[Dph3] + NADH = 2 Fe(2+)-[Dph3] + NAD(+) + H(+). The protein operates within protein modification; peptidyl-diphthamide biosynthesis. In terms of biological role, NADH-dependent reductase for DPH3 and cytochrome b5. Required for the first step of diphthamide biosynthesis, a post-translational modification of histidine which occurs in elongation factor 2. DPH1 and DPH2 transfer a 3-amino-3-carboxypropyl (ACP) group from S-adenosyl-L-methionine (SAM) to a histidine residue, the reaction is assisted by a reduction system comprising DPH3 and a NADH-dependent reductase, predominantly CBR1. By reducing DPH3, also involved in the formation of the tRNA wobble base modification mcm5s 2U (5-methoxycarbonylmethyl-2-thiouridine), mediated by the elongator complex. The cytochrome b5/NADH cytochrome b5 reductase electron transfer system supports the catalytic activity of several sterol biosynthetic enzymes. The sequence is that of NADH-cytochrome b5 reductase 1 (CBR1) from Cryptococcus neoformans var. neoformans serotype D (strain B-3501A) (Filobasidiella neoformans).